A 42-amino-acid polypeptide reads, in one-letter code: Serine/threonine-protein phosphatase 5 (42 aa).

A required for autoinhibition region spans residues 38-42 (QLGVM).

The protein belongs to the PPP phosphatase family. PP-5 (PP-T) subfamily. In terms of assembly, probably forms a complex composed of chaperones HSP90 and HSP70, co-chaperones STIP1/HOP, CDC37, PPP5C, PTGES3/p23, TSC1 and client protein TSC2. Probably forms a complex composed of chaperones HSP90 and HSP70, co-chaperones CDC37, PPP5C, TSC1 and client protein TSC2, CDK4, AKT, RAF1 and NR3C1; this complex does not contain co-chaperones STIP1/HOP and PTGES3/p23. Part of a complex with HSP90/HSP90AA1 and steroid receptors. Interacts (via TPR repeats) with HSP90AA1 (via TPR repeat-binding motif) or HSPA1A/HSPA1B; the interaction is direct and activates the phosphatase activity. Dissociates from HSPA1A/HSPA1B and HSP90AA1 in response to arachidonic acid. Interacts with CPNE1 (via VWFA domain). Interacts with CDC16, CDC27. Interacts with KLHDC10 (via the 6 Kelch repeats); inhibits the phosphatase activity on MAP3K5. Interacts with ATM and ATR; both interactions are induced by DNA damage and enhance ATM and ATR kinase activity. Interacts with RAD17; reduced by DNA damage. Interacts with nuclear receptors such as NR3C1/GCR and PPARG (activated by agonist); regulates their transactivation activities. Interacts (via TPR repeats) with S100 proteins S100A1, S100A2, S100A6, S100B and S100P; the interactions are calcium-dependent, strongly activate PPP5C phosphatase activity and compete with HSP90AA1 and MAP3K5 interactions. Interacts with SMAD2 and SMAD3 but not with SMAD1; decreases SMAD3 phosphorylation and protein levels. Interacts (via TPR repeats) with CRY1 and CRY2; the interaction with CRY2 down-regulates the phosphatase activity on CSNK1E. Interacts (via TPR repeats) with the active form of RAC1, GNA12 or GNA13; these interactions activate the phosphatase activity and translocate PPP5C to the cell membrane. Interacts with FLCN. It depends on Mg(2+) as a cofactor. The cofactor is Mn(2+). Activated by at least two different proteolytic cleavages producing a 56 kDa and a 50 kDa form.

It is found in the nucleus. It localises to the cytoplasm. The protein localises to the cell membrane. It catalyses the reaction O-phospho-L-seryl-[protein] + H2O = L-seryl-[protein] + phosphate. It carries out the reaction O-phospho-L-threonyl-[protein] + H2O = L-threonyl-[protein] + phosphate. Its activity is regulated as follows. Autoinhibited. In the autoinhibited state, the TPR domain interacts with the catalytic region and prevents substrate access to the catalytic pocket. Allosterically activated by various polyunsaturated fatty acids, free long-chain fatty-acids and long-chain fatty acyl-CoA esters, arachidonic acid being the most effective activator. HSP90A and probably RAC1, GNA12 and GNA13 can also release the autoinhibition by the TPR repeat. Activation by RAC1, GNA12 and GNA13 is synergistic with the one produced by fatty acids binding. Inhibited by okadaic acid. In terms of biological role, serine/threonine-protein phosphatase that dephosphorylates a myriad of proteins involved in different signaling pathways including the kinases CSNK1E, ASK1/MAP3K5, PRKDC and RAF1, the nuclear receptors NR3C1, PPARG, ESR1 and ESR2, SMAD proteins and TAU/MAPT. Implicated in wide ranging cellular processes, including apoptosis, differentiation, DNA damage response, cell survival, regulation of ion channels or circadian rhythms, in response to steroid and thyroid hormones, calcium, fatty acids, TGF-beta as well as oxidative and genotoxic stresses. Participates in the control of DNA damage response mechanisms such as checkpoint activation and DNA damage repair through, for instance, the regulation ATM/ATR-signaling and dephosphorylation of PRKDC and TP53BP1. Inhibits ASK1/MAP3K5-mediated apoptosis induced by oxidative stress. Plays a positive role in adipogenesis, mainly through the dephosphorylation and activation of PPARG transactivation function. Also dephosphorylates and inhibits the anti-adipogenic effect of NR3C1. Regulates the circadian rhythms, through the dephosphorylation and activation of CSNK1E. May modulate TGF-beta signaling pathway by the regulation of SMAD3 phosphorylation and protein expression levels. Dephosphorylates and may play a role in the regulation of TAU/MAPT. Through their dephosphorylation, may play a role in the regulation of ions channels such as KCNH2. Dephosphorylate FNIP1, disrupting interaction with HSP90AA1/Hsp90. The polypeptide is Serine/threonine-protein phosphatase 5 (PPP5C) (Oryctolagus cuniculus (Rabbit)).